We begin with the raw amino-acid sequence, 393 residues long: Glycerol-3-phosphate dehydrogenase [NAD(+)] 1 (393 aa).

NAD(+) is bound by residues 45-50 (GSGNWG), F133, K157, and A190. K157 is a substrate binding site. Residue K250 is the Proton acceptor of the active site. 2 residues coordinate NAD(+): R316 and Q345. Residue 316–317 (RN) participates in substrate binding.

This sequence belongs to the NAD-dependent glycerol-3-phosphate dehydrogenase family.

It carries out the reaction sn-glycerol 3-phosphate + NAD(+) = dihydroxyacetone phosphate + NADH + H(+). This Cyberlindnera jadinii (Torula yeast) protein is Glycerol-3-phosphate dehydrogenase [NAD(+)] 1 (gpd1).